The chain runs to 343 residues: MIKVGIVGGSGYGAIELIRLLQTHPHVTIAHIYSHSKVDEPLKLTFPHLQHIMQHFEALTVDNNDCDVIFFATPAPVSKTCIPPLVEKGIHVIDLSGAFRIKNREIYEAYYKETAAAQDDLNHAIYSISEWQSFDNNGTKLISNPGCFPTATLLALHPLISEKIVDLSSIIIDAKTGVSGAGRSLSQRVHFSEMNENLSAYAIGNHKHKPEIEQYLSIIAGQDVSVIFTPHLVPMTRGILSTIYVKLSSEYTTESLHKLMTSYYANQPFVRIRDIGTFPTTKEVLGSNYCDIGIYVDETTQTAILVSVIDNLVKGASGQAIQNLNILYDFEVTTGLNQSPVYP.

The active site involves Cys147.

It belongs to the NAGSA dehydrogenase family. Type 1 subfamily.

The protein resides in the cytoplasm. It carries out the reaction N-acetyl-L-glutamate 5-semialdehyde + phosphate + NADP(+) = N-acetyl-L-glutamyl 5-phosphate + NADPH + H(+). It functions in the pathway amino-acid biosynthesis; L-arginine biosynthesis; N(2)-acetyl-L-ornithine from L-glutamate: step 3/4. Functionally, catalyzes the NADPH-dependent reduction of N-acetyl-5-glutamyl phosphate to yield N-acetyl-L-glutamate 5-semialdehyde. This Staphylococcus aureus (strain USA300) protein is N-acetyl-gamma-glutamyl-phosphate reductase.